The sequence spans 1513 residues: Exo-beta-1,6-galactobiohydrolase (1513 aa).

The first 31 residues, 1-31, serve as a signal peptide directing secretion; the sequence is MRVLSKSLAAMVAAATLVGGGAFAVAGTAYA. In terms of domain architecture, Ricin B-type lectin spans 666 to 801; the sequence is VADTTSGDSA…PSANQTWTLR (136 aa). F5/8 type C domains are found at residues 965 to 1112 and 1116 to 1273; these read AIYV…AFVT and GAAK…VFAQ. Residues 1456 to 1480 are disordered; sequence VAPGPEEQKPGNTNKPGATGNGNKN. The segment covering 1465 to 1480 has biased composition (polar residues); it reads PGNTNKPGATGNGNKN. Residues 1489–1509 traverse the membrane as a helical segment; it reads VAAIAGAVALLAAAAGALFML.

This sequence belongs to the glycosyl hydrolase 30 family.

It localises to the cell membrane. It catalyses the reaction Hydrolysis of (1-&gt;6)-beta-D-galactosidic linkages in arabinogalactan proteins and (1-&gt;3):(1-&gt;6)-beta-galactans to yield (1-&gt;6)-beta-galactobiose as the final product.. Involved in the type II arabinogalactan (AG) side chains degradation. Specifically releases the non-reducing terminal beta-1,6-galactobiose (beta-1,6-Gal2) from both dearabinosylated larch AG and polymeric beta-1,6-galactan chains by an exo-mode of action. Shows lower activity with larch AG, and very weak activity with dearabinosylated gum arabic, gum arabic and potato galactan. Can probably release beta-1,6-Gal2 from the internal side chains of type II AG. This Bifidobacterium longum subsp. longum (strain ATCC 15707 / DSM 20219 / JCM 1217 / NCTC 11818 / E194b) protein is Exo-beta-1,6-galactobiohydrolase.